The chain runs to 424 residues: Gamma-glutamyl phosphate reductase (424 aa).

This sequence belongs to the gamma-glutamyl phosphate reductase family.

It localises to the cytoplasm. It carries out the reaction L-glutamate 5-semialdehyde + phosphate + NADP(+) = L-glutamyl 5-phosphate + NADPH + H(+). The protein operates within amino-acid biosynthesis; L-proline biosynthesis; L-glutamate 5-semialdehyde from L-glutamate: step 2/2. Catalyzes the NADPH-dependent reduction of L-glutamate 5-phosphate into L-glutamate 5-semialdehyde and phosphate. The product spontaneously undergoes cyclization to form 1-pyrroline-5-carboxylate. In Dehalococcoides mccartyi (strain ATCC BAA-2100 / JCM 16839 / KCTC 5957 / BAV1), this protein is Gamma-glutamyl phosphate reductase.